The primary structure comprises 1571 residues: MNSIESSSNDSNEINKNSNKNNTHLNSNYNNIYKNNSTSSNNNNNHNNIEIIGIDNNKNNNKNNNDNNNNNNNIDKKRKDSKNKQNQEINQEMSENKKIYNSNDSNCSSGSSSGGHVNNGHHILIEENERLEHENQEIQEIYKQKGMEFQKKDLRFGYDVNSNNNNNNGGGSSSGSSSGGSDESASNQPIIRTRNREGSILNLKKQGLVKEISQRFQTPDTASYTRPNANNISIKDKISILKKEQERRKQDSEVQQREKVIVLSADSSNIQIYHPSVLIEKMNSKLDTEEKPATTTTTTTTTSTSISTSTPTTTTTTTTNTSTTNDITIKPKTSPTKNNEERSQSPITTPKQPVEEIVKKVSTPKSNNTSKKTSSDTTPTGKTTKKDKKDKKDKSRDSGNLVIVNNTNNTSSNNNNNNNNNNNNETIIKRRGRVLVTPSSDLKKNIQIYFTIPINPPVNKTNKPNQLLSNTSQQFLKTLISNEIPIDCKINDINDTDAFSDLSASASSSSFITKSSQSLLNVQSLRVKAIKTSFNILFLMPNQSKKILQVKGSDTIENLKERIISDYLFNNNSNNNNNNCKYGADSYLILDFNDNPMERSLVLNKSDYILDKRAQGLIPKLKVIEKSTILDSDPSDELSPSEYEIIRKLIPGTDTWRGEEVEYFRRVTSRLRYEALPLIKGSIQSTLLVRLSPLPIPIVGNKILISIFLPITQVTKTLDLELNETADQFTNRLFTKNYSKHLPNVNSNDFILKVVGSSDFIHGPHDIRTFESIRNHIIQGTKPQLTLIQRPKPELDPQPFKPRFDYPPELIIDHSCSNAINCNNNNTNSTNNNNINFDNWDQITHISIREIKKPFRVKVMGSTRIPLSCIKDIDSSSVIVSISLYHGIECFSKAFTQPIIPPPFAFLAETLSVDWCEWLVFTNIDYSNLPVDARLSISVYSANETVDDVEEIKNLDEATKKLTPIGWINVMITDFKYQLRQGMVELSLWPSDFSNPLGTCSNNPSSSQSVGLTLEFEEFNLPVLFPRKTKFSTSVSVIEQPPTNINSNEMREFFEQITALDPLSDLKQEKYNQLWTLRHYSILFPQVLPRLMLSVPWTQATAVDEAISLLDRWPKLKPYESLELLDAKHANRKVREFAVTCLEDLSEDELLDILLQLVQVLKYEPFHDSKLSRFLLRKAILNRNIGHSFFWYLKSDLHDSNLSERFGILLESYLYACGAHRIELLKQMEVINNLTEVAKKIKPLKDQDRREFMIKEFESLEWPKRFHLTLNPRFESNGLIINKSKYMDSKKLPLRLSFTNTDMNADPIEVIFKAGDDLRQDMLTLQMIRLMDKLWQKEGLDLKLSPYGCISTGDMIGMIEVVLNSETTAKIQKSEGGGAASAFKLDPLANWILQHNKSDMEYQKAVDTFILSCAGYCVATYVLGIGDRHNDNLMVTKGGRLFHIDFGHFLGNYKKKFGFKRERAPFVFTPDFCYVMGGKESFKFSQFVNYCCTAYNIVRKNAKLFMNLFAMMVSTGIPELQSMEDLNYLKESFSIELSDEKAREKFVALIHESLATKTTQLNNFFHHLAHA.

The span at 1 to 73 (MNSIESSSND…NNDNNNNNNN (73 aa)) shows a compositional bias: low complexity. Disordered stretches follow at residues 1 to 119 (MNSI…HVNN), 157 to 195 (GYDVNSNNNNNNGGGSSSGSSSGGSDESASNQPIIRTRN), and 283 to 430 (NSKL…IIKR). Basic and acidic residues predominate over residues 74 to 85 (IDKKRKDSKNKQ). Residues 101–119 (NSNDSNCSSGSSSGGHVNN) are compositionally biased toward low complexity. Residues 283–292 (NSKLDTEEKP) are compositionally biased toward basic and acidic residues. Positions 294–324 (TTTTTTTTTSTSISTSTPTTTTTTTTNTSTT) are enriched in low complexity. Positions 325-337 (NDITIKPKTSPTK) are enriched in polar residues. Low complexity-rich tracts occupy residues 360–382 (KVSTPKSNNTSKKTSSDTTPTGK) and 405–424 (NNTNNTSSNNNNNNNNNNNN). The region spanning 530-627 (IKTSFNILFL…IPKLKVIEKS (98 aa)) is the PI3K-ABD domain. In terms of domain architecture, PI3K-RBD spans 700–789 (GNKILISIFL…GTKPQLTLIQ (90 aa)). In terms of domain architecture, C2 PI3K-type spans 851-1020 (IKKPFRVKVM…GLTLEFEEFN (170 aa)). Positions 1040–1216 (QPPTNINSNE…GILLESYLYA (177 aa)) constitute a PIK helical domain. The PI3K/PI4K catalytic domain occupies 1280–1558 (IINKSKYMDS…LIHESLATKT (279 aa)). Positions 1286–1292 (YMDSKKL) are G-loop. A catalytic loop region spans residues 1424-1432 (GIGDRHNDN). The segment at 1443 to 1469 (HIDFGHFLGNYKKKFGFKRERAPFVFT) is activation loop.

This sequence belongs to the PI3/PI4-kinase family.

It catalyses the reaction a 1,2-diacyl-sn-glycero-3-phospho-(1D-myo-inositol) + ATP = a 1,2-diacyl-sn-glycero-3-phospho-(1D-myo-inositol-3-phosphate) + ADP + H(+). This is Phosphatidylinositol 3-kinase 1 (pikA) from Dictyostelium discoideum (Social amoeba).